Consider the following 276-residue polypeptide: Expansin-A25 (276 aa).

Residues 1–27 (MKLLEQMVYVECFMIIMATLLVSMSYG) form the signal peptide. Residues 73-183 (QGACGYGDLF…RRISCARTGG (111 aa)) enclose the Expansin-like EG45 domain. In terms of domain architecture, Expansin-like CBD spans 193 to 272 (YFLMILPYNV…NWGFGQTFDG (80 aa)).

The protein belongs to the expansin family. Expansin A subfamily.

Its subcellular location is the secreted. The protein localises to the cell wall. It is found in the membrane. Its function is as follows. Causes loosening and extension of plant cell walls by disrupting non-covalent bonding between cellulose microfibrils and matrix glucans. No enzymatic activity has been found. This chain is Expansin-A25 (EXPA25), found in Arabidopsis thaliana (Mouse-ear cress).